The following is a 489-amino-acid chain: Lysine--tRNA ligase (489 aa).

Residues glutamate 398 and glutamate 405 each coordinate Mg(2+).

Belongs to the class-II aminoacyl-tRNA synthetase family. In terms of assembly, homodimer. Mg(2+) serves as cofactor.

The protein localises to the cytoplasm. The catalysed reaction is tRNA(Lys) + L-lysine + ATP = L-lysyl-tRNA(Lys) + AMP + diphosphate. In Moorella thermoacetica (strain ATCC 39073 / JCM 9320), this protein is Lysine--tRNA ligase.